Reading from the N-terminus, the 784-residue chain is Homeobox-leucine zipper protein ROC2 (784 aa).

The interval 60–113 (AESGDNMIRSRASDPLGGDEFESKSGSENVDGVSVDDQDPNQRPRKKRYHRHTQ) is disordered. A compositionally biased stretch (basic residues) spans 102-113 (RPRKKRYHRHTQ). The homeobox DNA-binding region spans 104–163 (RKKRYHRHTQHQIQEMEAFFKECPHPDDKQRKELSRELGLEPLQVKFWFQNKRTQMKNQH). Residues 158–234 (QMKNQHERHE…DRISAIAAKY (77 aa)) are a coiled coil. The START domain occupies 286-523 (SEVDKPMIVE…LDRQCERLAS (238 aa)).

It belongs to the HD-ZIP homeobox family. Class IV subfamily.

The protein resides in the nucleus. In terms of biological role, probable transcription factor. This chain is Homeobox-leucine zipper protein ROC2 (ROC2), found in Oryza sativa subsp. japonica (Rice).